The following is a 479-amino-acid chain: Ribulose bisphosphate carboxylase large chain (479 aa).

Positions 1-2 (MS) are excised as a propeptide. Proline 3 bears the N-acetylproline mark. Lysine 14 is subject to N6,N6,N6-trimethyllysine. Substrate is bound by residues asparagine 123 and threonine 173. Catalysis depends on lysine 175, which acts as the Proton acceptor. Lysine 177 is a substrate binding site. Mg(2+) contacts are provided by lysine 201, aspartate 203, and glutamate 204. An N6-carboxylysine modification is found at lysine 201. Histidine 294 serves as the catalytic Proton acceptor. Residues arginine 295, histidine 327, and serine 379 each contribute to the substrate site.

The protein belongs to the RuBisCO large chain family. Type I subfamily. Heterohexadecamer of 8 large chains and 8 small chains; disulfide-linked. The disulfide link is formed within the large subunit homodimers. Requires Mg(2+) as cofactor. Post-translationally, the disulfide bond which can form in the large chain dimeric partners within the hexadecamer appears to be associated with oxidative stress and protein turnover.

The protein resides in the plastid. The protein localises to the chloroplast. It carries out the reaction 2 (2R)-3-phosphoglycerate + 2 H(+) = D-ribulose 1,5-bisphosphate + CO2 + H2O. The enzyme catalyses D-ribulose 1,5-bisphosphate + O2 = 2-phosphoglycolate + (2R)-3-phosphoglycerate + 2 H(+). In terms of biological role, ruBisCO catalyzes two reactions: the carboxylation of D-ribulose 1,5-bisphosphate, the primary event in carbon dioxide fixation, as well as the oxidative fragmentation of the pentose substrate in the photorespiration process. Both reactions occur simultaneously and in competition at the same active site. The sequence is that of Ribulose bisphosphate carboxylase large chain from Ananas comosus (Pineapple).